The primary structure comprises 103 residues: Pyrimidine/purine nucleoside phosphorylase (103 aa).

It belongs to the nucleoside phosphorylase PpnP family.

The catalysed reaction is a purine D-ribonucleoside + phosphate = a purine nucleobase + alpha-D-ribose 1-phosphate. It catalyses the reaction adenosine + phosphate = alpha-D-ribose 1-phosphate + adenine. It carries out the reaction cytidine + phosphate = cytosine + alpha-D-ribose 1-phosphate. The enzyme catalyses guanosine + phosphate = alpha-D-ribose 1-phosphate + guanine. The catalysed reaction is inosine + phosphate = alpha-D-ribose 1-phosphate + hypoxanthine. It catalyses the reaction thymidine + phosphate = 2-deoxy-alpha-D-ribose 1-phosphate + thymine. It carries out the reaction uridine + phosphate = alpha-D-ribose 1-phosphate + uracil. The enzyme catalyses xanthosine + phosphate = alpha-D-ribose 1-phosphate + xanthine. Functionally, catalyzes the phosphorolysis of diverse nucleosides, yielding D-ribose 1-phosphate and the respective free bases. Can use uridine, adenosine, guanosine, cytidine, thymidine, inosine and xanthosine as substrates. Also catalyzes the reverse reactions. The sequence is that of Pyrimidine/purine nucleoside phosphorylase from Citrifermentans bemidjiense (strain ATCC BAA-1014 / DSM 16622 / JCM 12645 / Bem) (Geobacter bemidjiensis).